A 102-amino-acid chain; its full sequence is ATP-dependent Clp protease adapter protein ClpS (102 aa).

The protein belongs to the ClpS family. In terms of assembly, binds to the N-terminal domain of the chaperone ClpA.

In terms of biological role, involved in the modulation of the specificity of the ClpAP-mediated ATP-dependent protein degradation. This Shewanella pealeana (strain ATCC 700345 / ANG-SQ1) protein is ATP-dependent Clp protease adapter protein ClpS.